A 240-amino-acid chain; its full sequence is 2,3-bisphosphoglycerate-dependent phosphoglycerate mutase 2 (240 aa).

Residues 8 to 15, 21 to 22, R60, 87 to 90, K98, 114 to 115, and 183 to 184 each bind substrate; these read RHGQSEWN, TG, ERHY, RR, and GN. H9 acts as the Tele-phosphohistidine intermediate in catalysis. The active-site Proton donor/acceptor is the E87.

This sequence belongs to the phosphoglycerate mutase family. BPG-dependent PGAM subfamily.

It catalyses the reaction (2R)-2-phosphoglycerate = (2R)-3-phosphoglycerate. It functions in the pathway carbohydrate degradation; glycolysis; pyruvate from D-glyceraldehyde 3-phosphate: step 3/5. Catalyzes the interconversion of 2-phosphoglycerate and 3-phosphoglycerate. The chain is 2,3-bisphosphoglycerate-dependent phosphoglycerate mutase 2 from Bacillus cereus (strain ATCC 10987 / NRS 248).